Reading from the N-terminus, the 452-residue chain is Phosphoglucosamine mutase (452 aa).

Ser108 (phosphoserine intermediate) is an active-site residue. The Mg(2+) site is built by Ser108, Asp247, Asp249, and Asp251. Residue Ser108 is modified to Phosphoserine.

The protein belongs to the phosphohexose mutase family. It depends on Mg(2+) as a cofactor. Activated by phosphorylation.

It catalyses the reaction alpha-D-glucosamine 1-phosphate = D-glucosamine 6-phosphate. Functionally, catalyzes the conversion of glucosamine-6-phosphate to glucosamine-1-phosphate. The sequence is that of Phosphoglucosamine mutase from Paraburkholderia phytofirmans (strain DSM 17436 / LMG 22146 / PsJN) (Burkholderia phytofirmans).